A 420-amino-acid polypeptide reads, in one-letter code: UDP-glucuronic acid decarboxylase 1 (420 aa).

Residue methionine 1 is modified to N-acetylmethionine. The Cytoplasmic segment spans residues 1-19; the sequence is MVSKGLLRLVSSVNRRRMK. Residues 20–40 form a helical; Signal-anchor for type II membrane protein membrane-spanning segment; sequence LLLGIALFAYAASVWGNFVNM. The Lumenal portion of the chain corresponds to 41-420; it reads RSIQENGELK…RVKKGRTRHS (380 aa). Position 94 is a phosphothreonine (threonine 94). NAD(+) is bound by residues glycine 98, phenylalanine 99, valine 100, aspartate 119, asparagine 120, phenylalanine 122, threonine 123, glycine 124, aspartate 144, and valine 145. UDP-alpha-D-glucuronate is bound by residues leucine 149 and tyrosine 150. Positions 159 and 161 each coordinate NAD(+). Lysine 177 serves as a coordination point for UDP-alpha-D-glucuronate. NAD(+) is bound at residue threonine 178. UDP-alpha-D-glucuronate is bound by residues asparagine 185, glycine 188, lysine 191, and arginine 192. NAD(+) is bound by residues alanine 200, tyrosine 231, and lysine 235. The active-site Proton acceptor is tyrosine 231. UDP-alpha-D-glucuronate-binding residues include tyrosine 245, glutamine 248, and glutamate 249. Positions 261, 267, and 272 each coordinate NAD(+). N-linked (GlcNAc...) asparagine glycosylation is present at asparagine 316.

The protein belongs to the NAD(P)-dependent epimerase/dehydratase family. UDP-glucuronic acid decarboxylase subfamily. Homodimer and homotetramer. Interacts with AKT1. NAD(+) serves as cofactor.

The protein localises to the golgi apparatus. Its subcellular location is the golgi stack membrane. The catalysed reaction is UDP-alpha-D-glucuronate + H(+) = UDP-alpha-D-xylose + CO2. Its pathway is nucleotide-sugar biosynthesis; UDP-alpha-D-xylose biosynthesis; UDP-alpha-D-xylose from UDP-alpha-D-glucuronate: step 1/1. Functionally, catalyzes the NAD-dependent decarboxylation of UDP-glucuronic acid to UDP-xylose. Necessary for the biosynthesis of the core tetrasaccharide in glycosaminoglycan biosynthesis. The sequence is that of UDP-glucuronic acid decarboxylase 1 (Uxs1) from Mus musculus (Mouse).